The chain runs to 128 residues: Large ribosomal subunit protein mL52 (128 aa).

A mitochondrion-targeting transit peptide spans 1-28 (MLQIAKLCLATSGRITAQRYVAVTTARA).

It belongs to the mitochondrion-specific ribosomal protein mL52 family. As to quaternary structure, component of the mitochondrial ribosome large subunit (39S) which comprises a 16S rRNA and about 50 distinct proteins.

It localises to the mitochondrion. This is Large ribosomal subunit protein mL52 (mRpL52) from Drosophila pseudoobscura pseudoobscura (Fruit fly).